The sequence spans 468 residues: 6-phospho-beta-galactosidase (468 aa).

Residues Q19, H116, N159, E160, and N297 each contribute to the D-galactose 6-phosphate site. Residue E160 is the Proton donor of the active site. The Nucleophile role is filled by E375. 4 residues coordinate D-galactose 6-phosphate: S428, W429, K435, and Y437.

Belongs to the glycosyl hydrolase 1 family.

The enzyme catalyses a 6-phospho-beta-D-galactoside + H2O = D-galactose 6-phosphate + an alcohol. The protein operates within carbohydrate metabolism; lactose degradation; D-galactose 6-phosphate and beta-D-glucose from lactose 6-phosphate: step 1/1. This chain is 6-phospho-beta-galactosidase, found in Streptococcus sanguinis (strain SK36).